The chain runs to 268 residues: Ribosomal RNA small subunit methyltransferase A (268 aa).

S-adenosyl-L-methionine contacts are provided by Asn16, Leu18, Gly43, Glu64, Asp89, and Asn110.

The protein belongs to the class I-like SAM-binding methyltransferase superfamily. rRNA adenine N(6)-methyltransferase family. RsmA subfamily.

The protein resides in the cytoplasm. The enzyme catalyses adenosine(1518)/adenosine(1519) in 16S rRNA + 4 S-adenosyl-L-methionine = N(6)-dimethyladenosine(1518)/N(6)-dimethyladenosine(1519) in 16S rRNA + 4 S-adenosyl-L-homocysteine + 4 H(+). Specifically dimethylates two adjacent adenosines (A1518 and A1519) in the loop of a conserved hairpin near the 3'-end of 16S rRNA in the 30S particle. May play a critical role in biogenesis of 30S subunits. The sequence is that of Ribosomal RNA small subunit methyltransferase A from Pseudomonas syringae pv. syringae (strain B728a).